A 196-amino-acid polypeptide reads, in one-letter code: Nucleoside triphosphate pyrophosphatase (196 aa).

Asp72 serves as the catalytic Proton acceptor.

This sequence belongs to the Maf family. A divalent metal cation is required as a cofactor.

Its subcellular location is the cytoplasm. The enzyme catalyses a ribonucleoside 5'-triphosphate + H2O = a ribonucleoside 5'-phosphate + diphosphate + H(+). It carries out the reaction a 2'-deoxyribonucleoside 5'-triphosphate + H2O = a 2'-deoxyribonucleoside 5'-phosphate + diphosphate + H(+). Its function is as follows. Nucleoside triphosphate pyrophosphatase. May have a dual role in cell division arrest and in preventing the incorporation of modified nucleotides into cellular nucleic acids. This chain is Nucleoside triphosphate pyrophosphatase, found in Chlamydia muridarum (strain MoPn / Nigg).